The following is a 189-amino-acid chain: MEVILLERIGRLGQMGDTVKVKDGYARNFLLPQGKALRANEANKKKFEGQRAQLEAQNLERKNEAQAVADKLNGESFIVVRSAGETGQLYGSVSTRDIAEIITANGFTLHRNQVELNHPIKTIGLHEVSVSLHPEVQVKVMVNIARSTEEAECQAKGEDLTSIEAIYGIEEQPLSEEVFDDEDEAEDQA.

The protein belongs to the bacterial ribosomal protein bL9 family.

Functionally, binds to the 23S rRNA. This chain is Large ribosomal subunit protein bL9, found in Brucella melitensis biotype 2 (strain ATCC 23457).